A 402-amino-acid polypeptide reads, in one-letter code: Sex hormone-binding globulin (402 aa).

Positions 1–29 are cleaved as a signal peptide; it reads MESRGPLATSRLLLLLLLLLLRHTRQGWA. A glycan (O-linked (GalNAc...) threonine) is linked at Thr36. 2 Laminin G-like domains span residues 45 to 217 and 224 to 390; these read VHLS…LRSC and GIFL…THSC. Disulfide bonds link Cys193-Cys217 and Cys362-Cys390. N-linked (GlcNAc...) asparagine glycosylation is found at Asn380 and Asn396.

As to quaternary structure, homodimer. Post-translationally, variant Asn-356 contains one N-linked (GlcNAc...) at position 356. In terms of tissue distribution, isoform 1 and isoform 2 are present in liver and testis.

It is found in the secreted. Functionally, functions as an androgen transport protein, but may also be involved in receptor mediated processes. Each dimer binds one molecule of steroid. Specific for 5-alpha-dihydrotestosterone, testosterone, and 17-beta-estradiol. Regulates the plasma metabolic clearance rate of steroid hormones by controlling their plasma concentration. The polypeptide is Sex hormone-binding globulin (Homo sapiens (Human)).